We begin with the raw amino-acid sequence, 670 residues long: Acetyl-coenzyme A synthetase (670 aa).

Residues 205-208 (RRGK) and threonine 326 each bind CoA. ATP contacts are provided by residues 402–404 (GEP), 426–431 (STWWMT), aspartate 517, arginine 532, and arginine 543. The Mg(2+) site is built by valine 554, histidine 556, and valine 559. Arginine 601 is a binding site for CoA. Lysine 626 carries the N6-acetyllysine modification.

It belongs to the ATP-dependent AMP-binding enzyme family. Mg(2+) is required as a cofactor. In terms of processing, acetylated. Deacetylation by the SIR2-homolog deacetylase activates the enzyme.

It catalyses the reaction acetate + ATP + CoA = acetyl-CoA + AMP + diphosphate. In terms of biological role, catalyzes the conversion of acetate into acetyl-CoA (AcCoA), an essential intermediate at the junction of anabolic and catabolic pathways. AcsA undergoes a two-step reaction. In the first half reaction, AcsA combines acetate with ATP to form acetyl-adenylate (AcAMP) intermediate. In the second half reaction, it can then transfer the acetyl group from AcAMP to the sulfhydryl group of CoA, forming the product AcCoA. The sequence is that of Acetyl-coenzyme A synthetase from Pyrobaculum arsenaticum (strain DSM 13514 / JCM 11321 / PZ6).